Reading from the N-terminus, the 196-residue chain is Holliday junction branch migration complex subunit RuvA (196 aa).

The domain I stretch occupies residues 1-63 (MYDYIKGILT…EDAHLLYGFA (63 aa)). The tract at residues 64–142 (TENEKSVFLS…MSEEAGPVQQ (79 aa)) is domain II. Positions 142-146 (QVAPS) are flexible linker. Residues 147–196 (SENIALEEAMEAMEALGYRPAELKKIKKFFEGTNDTAENYIKSALKMLMK) are domain III.

The protein belongs to the RuvA family. Homotetramer. Forms an RuvA(8)-RuvB(12)-Holliday junction (HJ) complex. HJ DNA is sandwiched between 2 RuvA tetramers; dsDNA enters through RuvA and exits via RuvB. An RuvB hexamer assembles on each DNA strand where it exits the tetramer. Each RuvB hexamer is contacted by two RuvA subunits (via domain III) on 2 adjacent RuvB subunits; this complex drives branch migration. In the full resolvosome a probable DNA-RuvA(4)-RuvB(12)-RuvC(2) complex forms which resolves the HJ.

It is found in the cytoplasm. Its function is as follows. The RuvA-RuvB-RuvC complex processes Holliday junction (HJ) DNA during genetic recombination and DNA repair, while the RuvA-RuvB complex plays an important role in the rescue of blocked DNA replication forks via replication fork reversal (RFR). RuvA specifically binds to HJ cruciform DNA, conferring on it an open structure. The RuvB hexamer acts as an ATP-dependent pump, pulling dsDNA into and through the RuvAB complex. HJ branch migration allows RuvC to scan DNA until it finds its consensus sequence, where it cleaves and resolves the cruciform DNA. This Streptococcus suis (strain 98HAH33) protein is Holliday junction branch migration complex subunit RuvA.